The chain runs to 281 residues: MSIIEFWLEAKATIDRLIEQFLNSNRDWDLVDISSYILKDGKRFRGTLNMFFTVALGGDIKDSYGGALAIEILHSASLALDDIVDLDATRRGDKAAWVVYGNRKVIFITNYLIPTALRIIQTSYGDDALNTSIELWKDTSVGALRDMYDNSDYIRTIELKTGSLFKLSTVLSAYASKHYNTKQQMLDVGKYLGIIYQVIDDFVDYKTKKVEEIDGSAKQLFKYYREGKLEEYVRSVYLEYKQKYDELISNIPFQSKYLSEIRSLPEFLANGLLKEANIDKI.

Isopentenyl diphosphate is bound by residues lysine 42, arginine 45, and histidine 74. The Mg(2+) site is built by aspartate 81 and aspartate 85. Residue arginine 91 participates in isopentenyl diphosphate binding.

Belongs to the FPP/GGPP synthase family. As to quaternary structure, homodimer. It depends on Mg(2+) as a cofactor.

The enzyme catalyses 2 isopentenyl diphosphate + (2E,6E,10E)-geranylgeranyl diphosphate = all-trans-hexaprenyl diphosphate + 2 diphosphate. Its function is as follows. Catalyzes consecutive E-type condensation of two isopentenyl pyrophosphate (IPP) molecules with an allylic substrate such as geranylgeranyl diphosphate (GGPP), farnesyl diphosphate (FPP) or geranyl diphosphate (GPP) to yield the medium-chain product trans-C30-hexaprenyl pyrophosphate (HexPP). GGPP is the physiological substrate. The polypeptide is Hexaprenyl pyrophosphate synthase (gdS-2) (Saccharolobus solfataricus (strain ATCC 35092 / DSM 1617 / JCM 11322 / P2) (Sulfolobus solfataricus)).